The sequence spans 250 residues: Probable aquaporin TIP2-2 (250 aa).

Met-1 bears the N-acetylmethionine mark. The Cytoplasmic portion of the chain corresponds to 1–24 (MVKIEIGSVGDSFSVASLKAYLSE). An N6,N6-dimethyllysine modification is found at Lys-3. The chain crosses the membrane as a helical span at residues 25–45 (FIATLLFVFAGVGSALAFAKL). Residues 46–53 (TSDAALDP) lie on the Vacuolar side of the membrane. Residues 54-74 (AGLVAVAVAHAFALFVGVSIA) form a helical membrane-spanning segment. Topologically, residues 75 to 101 (ANISGGHLNPAVTLGLAVGGNITVITG) are cytoplasmic. Residues 83 to 85 (NPA) carry the NPA 1 motif. The helical transmembrane segment at 102 to 122 (FFYWIAQCLGSIVACLLLVFV) threads the bilayer. The Vacuolar portion of the chain corresponds to 123–133 (TNGESVPTHGV). A helical membrane pass occupies residues 134–154 (AAGLGAIEGVVMEIVVTFALV). The Cytoplasmic portion of the chain corresponds to 155–168 (YTVYATAADPKKGS). A helical transmembrane segment spans residues 169 to 189 (LGTIAPIAIGFIVGANILAAG). The Vacuolar segment spans residues 190–210 (PFSGGSMNPARSFGPAVVSGD). The NPA 2 motif lies at 197 to 199 (NPA). A helical transmembrane segment spans residues 211–231 (FSQIWIYWVGPLVGGALAGLI). Residues 232-250 (YGDVFIGSYAPAPTTESYP) lie on the Cytoplasmic side of the membrane. The residue at position 248 (Ser-248) is a Phosphoserine.

Belongs to the MIP/aquaporin (TC 1.A.8) family. TIP (TC 1.A.8.10) subfamily. Interacts with cucumber mosaic virus (CMV) Protein 1a. As to expression, expressed above groung and in roots.

The protein resides in the vacuole membrane. In terms of biological role, aquaporins facilitate the transport of water and small neutral solutes across cell membranes. This is Probable aquaporin TIP2-2 (TIP2-2) from Arabidopsis thaliana (Mouse-ear cress).